The primary structure comprises 78 residues: Beta-defensin 105A (78 aa).

Positions 1-27 are cleaved as a signal peptide; the sequence is MALIRKTFYFVFAVFFILVQQPSGCQA. Cystine bridges form between Cys43–Cys74, Cys53–Cys67, and Cys57–Cys73.

The protein belongs to the beta-defensin family.

Its subcellular location is the secreted. Functionally, has antimicrobial activity. The chain is Beta-defensin 105A (DEFB105A) from Macaca fascicularis (Crab-eating macaque).